The sequence spans 179 residues: Inner membrane-spanning protein YciB (179 aa).

5 helical membrane-spanning segments follow: residues 22-42 (IYAA…YSWV), 50-70 (MALI…FFHN), 76-96 (WKVT…QWVM), 121-141 (LAWA…AFWL), and 149-169 (FKVF…GIYI).

This sequence belongs to the YciB family.

Its subcellular location is the cell inner membrane. Its function is as follows. Plays a role in cell envelope biogenesis, maintenance of cell envelope integrity and membrane homeostasis. The protein is Inner membrane-spanning protein YciB of Shigella dysenteriae serotype 1 (strain Sd197).